A 553-amino-acid chain; its full sequence is Hydroxylamine reductase (553 aa).

Residues Cys-3, Cys-6, Cys-18, and Cys-25 each coordinate [2Fe-2S] cluster. Residues His-252, Glu-276, Cys-320, Cys-408, Cys-436, Cys-461, Glu-495, and Lys-497 each contribute to the hybrid [4Fe-2O-2S] cluster site. Cys-408 bears the Cysteine persulfide mark.

It belongs to the HCP family. [2Fe-2S] cluster is required as a cofactor. Hybrid [4Fe-2O-2S] cluster serves as cofactor.

It is found in the cytoplasm. It carries out the reaction A + NH4(+) + H2O = hydroxylamine + AH2 + H(+). Its function is as follows. Catalyzes the reduction of hydroxylamine to form NH(3) and H(2)O. This Tolumonas auensis (strain DSM 9187 / NBRC 110442 / TA 4) protein is Hydroxylamine reductase.